The chain runs to 231 residues: Large ribosomal subunit protein uL1 (231 aa).

This sequence belongs to the universal ribosomal protein uL1 family. As to quaternary structure, part of the 50S ribosomal subunit.

Functionally, binds directly to 23S rRNA. The L1 stalk is quite mobile in the ribosome, and is involved in E site tRNA release. Protein L1 is also a translational repressor protein, it controls the translation of the L11 operon by binding to its mRNA. The chain is Large ribosomal subunit protein uL1 from Paracidovorax citrulli (strain AAC00-1) (Acidovorax citrulli).